The chain runs to 380 residues: Serpin B7 (380 aa).

Residue serine 217 is modified to Phosphoserine.

Belongs to the serpin family. Ov-serpin subfamily.

It is found in the cytoplasm. Its function is as follows. Might function as an inhibitor of Lys-specific proteases. Might influence the maturation of megakaryocytes via its action as a serpin. The protein is Serpin B7 (Serpinb7) of Mus musculus (Mouse).